The chain runs to 291 residues: Kidney mitochondrial carrier protein 1 (291 aa).

The residue at position 2 (Ser-2) is an N-acetylserine. Solcar repeat units lie at residues 7-96, 104-189, and 198-289; these read KPFV…LKRL, ETLL…TKKH, and DTVS…LKKL. The next 6 membrane-spanning stretches (helical) occupy residues 9–26, 71–89, 106–124, 164–183, 204–224, and 264–283; these read FVYG…TFPI, GIAP…KIGT, LLIN…SAIA, GVSL…LPVY, FLSS…VDVV, and GFWP…FLTY.

The protein belongs to the mitochondrial carrier (TC 2.A.29) family. As to quaternary structure, interacts with VDAC1.

Its subcellular location is the mitochondrion inner membrane. The enzyme catalyses sulfite(in) + sulfate(out) = sulfite(out) + sulfate(in). The catalysed reaction is thiosulfate(in) + sulfate(out) = thiosulfate(out) + sulfate(in). It catalyses the reaction sulfate(out) + phosphate(in) = sulfate(in) + phosphate(out). It carries out the reaction oxalate(in) + sulfate(out) = oxalate(out) + sulfate(in). The enzyme catalyses malonate(in) + sulfate(out) = malonate(out) + sulfate(in). The catalysed reaction is maleate(in) + sulfate(out) = maleate(out) + sulfate(in). It catalyses the reaction (S)-malate(in) + sulfate(out) = (S)-malate(out) + sulfate(in). It carries out the reaction (3S)-citramalate(in) + sulfate(out) = (3S)-citramalate(out) + sulfate(in). The enzyme catalyses (3R)-citramalate(in) + sulfate(out) = (3R)-citramalate(out) + sulfate(in). The catalysed reaction is sulfate(out) + succinate(in) = sulfate(in) + succinate(out). It catalyses the reaction (S,S)-tartrate(in) + sulfate(out) = (S,S)-tartrate(out) + sulfate(in). It carries out the reaction (2R,3R)-tartrate(in) + sulfate(out) = (2R,3R)-tartrate(out) + sulfate(in). The enzyme catalyses D-aspartate(in) + sulfate(out) = D-aspartate(out) + sulfate(in). The catalysed reaction is L-aspartate(in) + sulfate(out) = L-aspartate(out) + sulfate(in). It catalyses the reaction sulfate(in) = sulfate(out). It carries out the reaction phosphate(in) = phosphate(out). The enzyme catalyses (S)-malate(out) = (S)-malate(in). Functionally, antiporter that transports inorganic anions (sulfate, sulfite, thiosulfate and phosphate) and, to a lesser extent, a variety of dicarboxylates (e.g. malonate, malate and citramalate) and, even more so, aspartate. The sulfate/sulfate exchange is much higher than the phosphate/phosphate and malate/malate exchanges. The transport affinities is higher for sulfate and thiosulfate than for any other substrate. May catalyze the export of sulfite and thiosulfate (the hydrogen sulfide degradation products) from the mitochondria, thereby modulating the level of the hydrogen sulfide. Also may mediate a very low unidirectional transport of sulfate, phosphate and (S)-malate. This chain is Kidney mitochondrial carrier protein 1, found in Rattus norvegicus (Rat).